The following is a 242-amino-acid chain: Ubiquinone biosynthesis O-methyltransferase (242 aa).

The S-adenosyl-L-methionine site is built by R44, G64, D85, and M129.

The protein belongs to the methyltransferase superfamily. UbiG/COQ3 family.

The catalysed reaction is a 3-demethylubiquinol + S-adenosyl-L-methionine = a ubiquinol + S-adenosyl-L-homocysteine + H(+). It carries out the reaction a 3-(all-trans-polyprenyl)benzene-1,2-diol + S-adenosyl-L-methionine = a 2-methoxy-6-(all-trans-polyprenyl)phenol + S-adenosyl-L-homocysteine + H(+). Its pathway is cofactor biosynthesis; ubiquinone biosynthesis. In terms of biological role, O-methyltransferase that catalyzes the 2 O-methylation steps in the ubiquinone biosynthetic pathway. The protein is Ubiquinone biosynthesis O-methyltransferase of Salmonella agona (strain SL483).